The primary structure comprises 463 residues: 23S rRNA (uracil(1939)-C(5))-methyltransferase RlmD (463 aa).

The TRAM domain maps to 8–76 (RSKSATVYTF…KRFEEGELIE (69 aa)). [4Fe-4S] cluster contacts are provided by cysteine 90, cysteine 96, cysteine 99, and cysteine 178. Residues glutamine 288, phenylalanine 317, asparagine 322, glutamate 341, aspartate 368, and aspartate 389 each coordinate S-adenosyl-L-methionine. The active-site Nucleophile is the cysteine 415.

Belongs to the class I-like SAM-binding methyltransferase superfamily. RNA M5U methyltransferase family. RlmD subfamily.

It carries out the reaction uridine(1939) in 23S rRNA + S-adenosyl-L-methionine = 5-methyluridine(1939) in 23S rRNA + S-adenosyl-L-homocysteine + H(+). Its function is as follows. Catalyzes the formation of 5-methyl-uridine at position 1939 (m5U1939) in 23S rRNA. The sequence is that of 23S rRNA (uracil(1939)-C(5))-methyltransferase RlmD from Acinetobacter baylyi (strain ATCC 33305 / BD413 / ADP1).